The primary structure comprises 108 residues: UPF0145 protein alr2488 (108 aa).

Belongs to the UPF0145 family.

The chain is UPF0145 protein alr2488 from Nostoc sp. (strain PCC 7120 / SAG 25.82 / UTEX 2576).